Here is a 1588-residue protein sequence, read N- to C-terminus: Pentafunctional AROM polypeptide (1588 aa).

The 3-dehydroquinate synthase stretch occupies residues 1 to 392; sequence MVQLAKVPIL…YGDSAQFVSD (392 aa). NAD(+)-binding positions include 43 to 45, 78 to 81, 109 to 111, and Asp114; these read DTN, ETSK, and GGV. Arg125 serves as a coordination point for 7-phospho-2-dehydro-3-deoxy-D-arabino-heptonate. Residue 134 to 135 coordinates NAD(+); it reads TS. Residues Asp141 and Lys147 each coordinate 7-phospho-2-dehydro-3-deoxy-D-arabino-heptonate. Lys156 is an NAD(+) binding site. A 7-phospho-2-dehydro-3-deoxy-D-arabino-heptonate-binding site is contributed by Asn157. NAD(+)-binding positions include 174–177 and Asn185; that span reads WLET. Glu189 contributes to the Zn(2+) binding site. 7-phospho-2-dehydro-3-deoxy-D-arabino-heptonate contacts are provided by residues 189–192 and Lys258; that span reads EVIK. Glu268 acts as the Proton acceptor; for 3-dehydroquinate synthase activity in catalysis. 7-phospho-2-dehydro-3-deoxy-D-arabino-heptonate contacts are provided by residues 272–276 and His279; that span reads RNLLN. His279 lines the Zn(2+) pocket. Residue His283 is the Proton acceptor; for 3-dehydroquinate synthase activity of the active site. 7-phospho-2-dehydro-3-deoxy-D-arabino-heptonate-binding residues include His295 and Lys364. Zn(2+) is bound at residue His295. The interval 405-871 is EPSP synthase; the sequence is VYPFKDIPAD…WDVLHSELGA (467 aa). Catalysis depends on Cys853, which acts as the For EPSP synthase activity. The segment at 890 to 1080 is shikimate kinase; the sequence is SVVIIGMRAA…IPSGRSAFVC (191 aa). 895 to 902 provides a ligand contact to ATP; the sequence is GMRAAGKT. The interval 1081–1293 is 3-dehydroquinase; sequence LTFDDLTEQT…AAPGQLTVAQ (213 aa). His1198 (proton acceptor; for 3-dehydroquinate dehydratase activity) is an active-site residue. Lys1227 functions as the Schiff-base intermediate with substrate; for 3-dehydroquinate dehydratase activity in the catalytic mechanism. The shikimate dehydrogenase stretch occupies residues 1306-1588; sequence PKELFVVGKP…KAIFDAVTKE (283 aa).

The protein in the N-terminal section; belongs to the sugar phosphate cyclases superfamily. Dehydroquinate synthase family. This sequence in the 2nd section; belongs to the EPSP synthase family. In the 3rd section; belongs to the shikimate kinase family. It in the 4th section; belongs to the type-I 3-dehydroquinase family. The protein in the C-terminal section; belongs to the shikimate dehydrogenase family. In terms of assembly, homodimer. Zn(2+) serves as cofactor.

The protein resides in the cytoplasm. It carries out the reaction 7-phospho-2-dehydro-3-deoxy-D-arabino-heptonate = 3-dehydroquinate + phosphate. The enzyme catalyses 3-dehydroquinate = 3-dehydroshikimate + H2O. It catalyses the reaction shikimate + NADP(+) = 3-dehydroshikimate + NADPH + H(+). The catalysed reaction is shikimate + ATP = 3-phosphoshikimate + ADP + H(+). It carries out the reaction 3-phosphoshikimate + phosphoenolpyruvate = 5-O-(1-carboxyvinyl)-3-phosphoshikimate + phosphate. It functions in the pathway metabolic intermediate biosynthesis; chorismate biosynthesis; chorismate from D-erythrose 4-phosphate and phosphoenolpyruvate: step 2/7. Its pathway is metabolic intermediate biosynthesis; chorismate biosynthesis; chorismate from D-erythrose 4-phosphate and phosphoenolpyruvate: step 3/7. The protein operates within metabolic intermediate biosynthesis; chorismate biosynthesis; chorismate from D-erythrose 4-phosphate and phosphoenolpyruvate: step 4/7. It participates in metabolic intermediate biosynthesis; chorismate biosynthesis; chorismate from D-erythrose 4-phosphate and phosphoenolpyruvate: step 5/7. It functions in the pathway metabolic intermediate biosynthesis; chorismate biosynthesis; chorismate from D-erythrose 4-phosphate and phosphoenolpyruvate: step 6/7. Its function is as follows. The AROM polypeptide catalyzes 5 consecutive enzymatic reactions in prechorismate polyaromatic amino acid biosynthesis. The sequence is that of Pentafunctional AROM polypeptide from Saccharomyces cerevisiae (strain YJM789) (Baker's yeast).